The following is a 475-amino-acid chain: Ribulose bisphosphate carboxylase large chain (475 aa).

Positions 1-2 (MS) are excised as a propeptide. At proline 3 the chain carries N-acetylproline. Lysine 14 carries the N6,N6,N6-trimethyllysine modification. Substrate contacts are provided by asparagine 123 and threonine 173. Lysine 175 serves as the catalytic Proton acceptor. Position 177 (lysine 177) interacts with substrate. Residues lysine 201, aspartate 203, and glutamate 204 each contribute to the Mg(2+) site. Lysine 201 carries the post-translational modification N6-carboxylysine. Histidine 294 functions as the Proton acceptor in the catalytic mechanism. The substrate site is built by arginine 295, histidine 327, and serine 379.

Belongs to the RuBisCO large chain family. Type I subfamily. Heterohexadecamer of 8 large chains and 8 small chains; disulfide-linked. The disulfide link is formed within the large subunit homodimers. Mg(2+) serves as cofactor. In terms of processing, the disulfide bond which can form in the large chain dimeric partners within the hexadecamer appears to be associated with oxidative stress and protein turnover.

The protein resides in the plastid. The protein localises to the chloroplast. It carries out the reaction 2 (2R)-3-phosphoglycerate + 2 H(+) = D-ribulose 1,5-bisphosphate + CO2 + H2O. The enzyme catalyses D-ribulose 1,5-bisphosphate + O2 = 2-phosphoglycolate + (2R)-3-phosphoglycerate + 2 H(+). Functionally, ruBisCO catalyzes two reactions: the carboxylation of D-ribulose 1,5-bisphosphate, the primary event in carbon dioxide fixation, as well as the oxidative fragmentation of the pentose substrate in the photorespiration process. Both reactions occur simultaneously and in competition at the same active site. In Pinus radiata (Monterey pine), this protein is Ribulose bisphosphate carboxylase large chain.